The chain runs to 132 residues: Fatty acid-binding protein 9 (132 aa).

Ser-13, Ser-14, Ser-40, Ser-42, Ser-44, and Ser-91 each carry phosphoserine.

The protein belongs to the calycin superfamily. Fatty-acid binding protein (FABP) family. Testis.

It localises to the cytoplasm. This is Fatty acid-binding protein 9 (Fabp9) from Mus musculus (Mouse).